The following is a 258-amino-acid chain: UPF0246 protein YaaA (258 aa).

This sequence belongs to the UPF0246 family.

The protein is UPF0246 protein YaaA of Escherichia coli O127:H6 (strain E2348/69 / EPEC).